We begin with the raw amino-acid sequence, 350 residues long: tRNA uridine(34) hydroxylase (350 aa).

The 95-residue stretch at 146–240 (DDPDALFIDM…YARKAREQGL (95 aa)) folds into the Rhodanese domain. Cys200 (cysteine persulfide intermediate) is an active-site residue.

This sequence belongs to the TrhO family.

The catalysed reaction is uridine(34) in tRNA + AH2 + O2 = 5-hydroxyuridine(34) in tRNA + A + H2O. Its function is as follows. Catalyzes oxygen-dependent 5-hydroxyuridine (ho5U) modification at position 34 in tRNAs. The polypeptide is tRNA uridine(34) hydroxylase (Shigella sonnei (strain Ss046)).